The chain runs to 247 residues: Neurotrophic factor BDNF precursor form (247 aa).

The N-terminal stretch at 1–18 (MTILFLTMVISYFGCMKA) is a signal peptide. Residues 19–128 (APMKEANVRG…AANMSVRVRR (110 aa)) constitute a propeptide that is removed on maturation. Asparagine 121 carries N-linked (GlcNAc...) asparagine glycosylation. 3 cysteine pairs are disulfide-bonded: cysteine 141/cysteine 208, cysteine 186/cysteine 237, and cysteine 196/cysteine 239.

The protein belongs to the NGF-beta family. In terms of assembly, monomers and homodimers. Binds to NTRK2/TRKB. Can form heterodimers with other neurotrophin family members, such as NTF3 and NTF4 (in vitro), but the physiological relevance of this is not clear. BDNF precursor form: interacts with the heterodimer formed by NGFR and SORCS2. Mature BDNF has much lower affinity for the heterodimer formed by NGFR and SORCS2. In terms of processing, N-glycosylated and glycosulfated, contrary to mature BDNF. Post-translationally, mature BDNF is produced by proteolytic removal of the propeptide, catalyzed by a FURIN family member. In addition, the precursor form is proteolytically cleaved within the propeptide, but this is not an obligatory intermediate for the production of mature BDNF. Can be converted into mature BDNF by plasmin (PLG).

The protein localises to the secreted. Its function is as follows. Important signaling molecule that activates signaling cascades downstream of NTRK2. During development, promotes the survival and differentiation of selected neuronal populations of the peripheral and central nervous systems. Participates in axonal growth, pathfinding and in the modulation of dendritic growth and morphology. Major regulator of synaptic transmission and plasticity at adult synapses in many regions of the CNS. The versatility of BDNF is emphasized by its contribution to a range of adaptive neuronal responses including long-term potentiation (LTP), long-term depression (LTD), certain forms of short-term synaptic plasticity, as well as homeostatic regulation of intrinsic neuronal excitability. Important signaling molecule that activates signaling cascades downstream of NTRK2. Activates signaling cascades via the heterodimeric receptor formed by NGFR and SORCS2. Signaling via NGFR and SORCS2 plays a role in synaptic plasticity and long-term depression (LTD). Binding to NGFR and SORCS2 promotes neuronal apoptosis. Promotes neuronal growth cone collapse. This is Neurotrophic factor BDNF precursor form (BDNF) from Felis catus (Cat).